The chain runs to 714 residues: MEMTSAFTLNVRLDNIAVITIDVPGEKMNTLKAEFASQVRAIIKQLRENKELRGVVFVSAKPDNFIAGADINMIGNCKTAQEAEALARQGQQLMAEIHALPIPVIAAIHGACLGGGLELALACHGRVCTDDPKTVLGLPEVQLGLLPGSGGTQRLPRLIGVSTALEMILTGKQLRAKQALKLGLVDDVVPHSILLEVAVELAKKDRPSSRPLPVRERILAGPLGRALLFKMVGKKTEHKTQGNYPATERILEVVETGLAQGTSSGYDAEARAFGELAMTPQSQALRSIFFASTDVKKDPGSDAPPAPLNSVGILGGGLMGGGIAYVTACKAGLPVRIKDINPQGINHALKYSWDQLEGKVRRRHLKASERDKQLALISGTTDYRGFAHRDLIIEAVFENLELKQQMVAEVEQNSAAHTIFASNTSSLPIGDIAAHATRPEQVIGLHFFSPVEKMPLVEIIPHAGTSAQTIATTVKLAKKQGKTPIVVRDKAGFYVNRILAPYINEAIRMLTEGERVEHIDAALVKFGFPVGPIQLLDEVGIDTGTKIIPVLEAAYGERFSAPANVVSSILNDDRKGRKNGRGFYLYGQKGRKSKKQVDPAIYPLIGAQGQGRLSAPQVAERCVMLMLNEAVRCVDEQVIRSVRDGDIGAVFGIGFPPFLGGPFRYIDSLGAGEVVAIMQRLATQYGSRFTPCERLVEMGARGESFWKTTATDLQ.

The segment at Met-1 to Pro-190 is enoyl-CoA hydratase. The tract at residues Ala-306–Gln-714 is 3-hydroxyacyl-CoA dehydrogenase.

The protein in the N-terminal section; belongs to the enoyl-CoA hydratase/isomerase family. This sequence in the central section; belongs to the 3-hydroxyacyl-CoA dehydrogenase family. In terms of assembly, heterotetramer of two alpha chains (FadJ) and two beta chains (FadI).

The protein localises to the cytoplasm. It carries out the reaction a (3S)-3-hydroxyacyl-CoA = a (2E)-enoyl-CoA + H2O. The enzyme catalyses a 4-saturated-(3S)-3-hydroxyacyl-CoA = a (3E)-enoyl-CoA + H2O. It catalyses the reaction a (3S)-3-hydroxyacyl-CoA + NAD(+) = a 3-oxoacyl-CoA + NADH + H(+). The catalysed reaction is (3S)-3-hydroxybutanoyl-CoA = (3R)-3-hydroxybutanoyl-CoA. Its pathway is lipid metabolism; fatty acid beta-oxidation. Functionally, catalyzes the formation of a hydroxyacyl-CoA by addition of water on enoyl-CoA. Also exhibits 3-hydroxyacyl-CoA epimerase and 3-hydroxyacyl-CoA dehydrogenase activities. The polypeptide is Fatty acid oxidation complex subunit alpha (Escherichia coli O8 (strain IAI1)).